The primary structure comprises 191 residues: Ribonuclease HII (191 aa).

Residues 4-191 (YTAAGLDEVG…HRKTFLSKIQ (188 aa)) enclose the RNase H type-2 domain. A divalent metal cation is bound by residues aspartate 10, glutamate 11, and aspartate 106.

Belongs to the RNase HII family. Requires Mn(2+) as cofactor. Mg(2+) serves as cofactor.

The protein localises to the cytoplasm. The enzyme catalyses Endonucleolytic cleavage to 5'-phosphomonoester.. Functionally, endonuclease that specifically degrades the RNA of RNA-DNA hybrids. The protein is Ribonuclease HII of Prochlorococcus marinus (strain SARG / CCMP1375 / SS120).